The primary structure comprises 95 residues: Aspartyl/glutamyl-tRNA(Asn/Gln) amidotransferase subunit C (95 aa).

Belongs to the GatC family. As to quaternary structure, heterotrimer of A, B and C subunits.

The enzyme catalyses L-glutamyl-tRNA(Gln) + L-glutamine + ATP + H2O = L-glutaminyl-tRNA(Gln) + L-glutamate + ADP + phosphate + H(+). It catalyses the reaction L-aspartyl-tRNA(Asn) + L-glutamine + ATP + H2O = L-asparaginyl-tRNA(Asn) + L-glutamate + ADP + phosphate + 2 H(+). Functionally, allows the formation of correctly charged Asn-tRNA(Asn) or Gln-tRNA(Gln) through the transamidation of misacylated Asp-tRNA(Asn) or Glu-tRNA(Gln) in organisms which lack either or both of asparaginyl-tRNA or glutaminyl-tRNA synthetases. The reaction takes place in the presence of glutamine and ATP through an activated phospho-Asp-tRNA(Asn) or phospho-Glu-tRNA(Gln). The sequence is that of Aspartyl/glutamyl-tRNA(Asn/Gln) amidotransferase subunit C from Pseudomonas paraeruginosa (strain DSM 24068 / PA7) (Pseudomonas aeruginosa (strain PA7)).